The following is a 418-amino-acid chain: Isocitrate dehydrogenase [NADP] (418 aa).

Threonine 106 serves as a coordination point for NADP(+). Serine 115, asparagine 117, arginine 121, arginine 131, and arginine 155 together coordinate D-threo-isocitrate. A Phosphoserine modification is found at serine 115. At threonine 193 the chain carries Phosphothreonine. Aspartate 309 is a Mg(2+) binding site. NADP(+) is bound by residues 341–347 (HGTAPKY), asparagine 354, tyrosine 393, and arginine 397.

It belongs to the isocitrate and isopropylmalate dehydrogenases family. In terms of assembly, homodimer. Mg(2+) is required as a cofactor. Requires Mn(2+) as cofactor.

The protein localises to the secreted. It carries out the reaction D-threo-isocitrate + NADP(+) = 2-oxoglutarate + CO2 + NADPH. Its function is as follows. Catalyzes the oxidative decarboxylation of isocitrate to 2-oxoglutarate and carbon dioxide with the concomitant reduction of NADP(+). The polypeptide is Isocitrate dehydrogenase [NADP] (icd) (Pseudomonas aeruginosa (strain UCBPP-PA14)).